A 124-amino-acid chain; its full sequence is uncharacterized protein (124 aa).

Residues 1 to 65 are disordered; sequence MAENSRYVRL…RPASSSNPDY (65 aa). Residues 37 to 47 are compositionally biased toward polar residues; that stretch reads LNSNDAESQQV.

This is an uncharacterized protein from Microplitis demolitor (Parasitoid wasp).